Reading from the N-terminus, the 549-residue chain is S-methyl thiourocanate hydratase (549 aa).

Positions 49, 173, 174, 175, 193, 198, 239, 240, 260, 270, and 318 each coordinate NAD(+).

The protein belongs to the urocanase family. S-methyl thiourocanate hydratase subfamily. The cofactor is NAD(+).

It carries out the reaction S-methyl-(E)-thiourocanate + H2O = S-methyl-thiohydantoin-5-propanoate. Hydratase involved in the catabolism of S-methyl ergothioneine. Catalyzes the 1,4-addition of H(2)O to S-methyl thiourocanate, leading to the formation of S-methyl-thiohydantoin-5-propanoate, the second step in S-methyl ergothioneine degradation. Cannot use urocanate or thiourocanate as substrate. The sequence is that of S-methyl thiourocanate hydratase from Variovorax sp. (strain JCM 16519 / RA8).